Reading from the N-terminus, the 123-residue chain is UPF0102 protein PputGB1_4524 (123 aa).

This sequence belongs to the UPF0102 family.

In Pseudomonas putida (strain GB-1), this protein is UPF0102 protein PputGB1_4524.